A 170-amino-acid polypeptide reads, in one-letter code: CFA/I fimbrial subunit B (170 aa).

Residues 1–23 form the signal peptide; it reads MKFKKTIGAMALTTMFVAVSASA.

Belongs to the fimbrial CS1 protein family. As to quaternary structure, CFA/I fimbriae are rather rigid, thread-like filaments of 0.5-1 micrometer, with an apparent axial hole, and a diameter of 7 nanometers. A single CFA/I fimbria consists of about 100 identical protein subunits.

The protein localises to the fimbrium. Its function is as follows. Fimbriae (also called pili), polar filaments radiating from the surface of the bacterium to a length of 0.5-1.5 micrometers and numbering 100-300 per cell, enable bacteria to colonize the epithelium of specific host organs. The chain is CFA/I fimbrial subunit B (cfaB) from Escherichia coli O78:H11 (strain H10407 / ETEC).